Reading from the N-terminus, the 196-residue chain is uncharacterized protein (196 aa).

FAD-binding positions include 15–22, 68–71, tyrosine 107, and 123–126; these read SQGKFNKT, GWWM, and TWNA.

It belongs to the oxidoreductase MdaB family. It depends on FAD as a cofactor.

This is an uncharacterized protein from Schizosaccharomyces pombe (strain 972 / ATCC 24843) (Fission yeast).